Consider the following 325-residue polypeptide: Beta-ketoacyl-[acyl-carrier-protein] synthase III (325 aa).

Catalysis depends on residues C114 and H252. The segment at 253–257 (QANFR) is ACP-binding. The active site involves N282.

This sequence belongs to the thiolase-like superfamily. FabH family. In terms of assembly, homodimer.

The protein localises to the cytoplasm. The catalysed reaction is malonyl-[ACP] + acetyl-CoA + H(+) = 3-oxobutanoyl-[ACP] + CO2 + CoA. Its pathway is lipid metabolism; fatty acid biosynthesis. Its function is as follows. Catalyzes the condensation reaction of fatty acid synthesis by the addition to an acyl acceptor of two carbons from malonyl-ACP. Catalyzes the first condensation reaction which initiates fatty acid synthesis and may therefore play a role in governing the total rate of fatty acid production. Possesses both acetoacetyl-ACP synthase and acetyl transacylase activities. Its substrate specificity determines the biosynthesis of branched-chain and/or straight-chain of fatty acids. The polypeptide is Beta-ketoacyl-[acyl-carrier-protein] synthase III (Novosphingobium aromaticivorans (strain ATCC 700278 / DSM 12444 / CCUG 56034 / CIP 105152 / NBRC 16084 / F199)).